The sequence spans 515 residues: Fatty acyl-CoA reductase 1 (515 aa).

The Cytoplasmic segment spans residues 1–465 (MVSIPEYYEG…ARKHLNKLRN (465 aa)). The interval 451 to 507 (SGLPAARKHLNKLRNIRYGFNTILVILIWRIFIARSQMARNIWYFVVSLCYKFLSYF) is necessary and sufficient for PEX19-mediated localization into peroxisome membrane. The helical transmembrane segment at 466–483 (IRYGFNTILVILIWRIFI) threads the bilayer. The Peroxisomal portion of the chain corresponds to 484–515 (ARSQMARNIWYFVVSLCYKFLSYFRASSTMRY).

The protein belongs to the fatty acyl-CoA reductase family. In terms of assembly, interacts with PEX19; PEX19 mediates the targeting of FAR1 to peroxisomes.

The protein localises to the peroxisome membrane. It catalyses the reaction a long-chain fatty acyl-CoA + 2 NADPH + 2 H(+) = a long-chain primary fatty alcohol + 2 NADP(+) + CoA. The catalysed reaction is hexadecanoyl-CoA + 2 NADPH + 2 H(+) = hexadecan-1-ol + 2 NADP(+) + CoA. The enzyme catalyses octadecanoyl-CoA + 2 NADPH + 2 H(+) = octadecan-1-ol + 2 NADP(+) + CoA. It carries out the reaction (9Z)-octadecenoyl-CoA + 2 NADPH + 2 H(+) = (9Z)-octadecen-1-ol + 2 NADP(+) + CoA. It catalyses the reaction (9Z,12Z)-octadecadienoyl-CoA + 2 NADPH + 2 H(+) = (9Z,12Z)-octadecadien-1-ol + 2 NADP(+) + CoA. The catalysed reaction is eicosanoyl-CoA + 2 NADPH + 2 H(+) = eicosan-1-ol + 2 NADP(+) + CoA. The enzyme catalyses 16-methylheptadecanoyl-CoA + 2 NADPH + 2 H(+) = 16-methylheptadecan-1-ol + 2 NADP(+) + CoA. It carries out the reaction 18-methylnonadecanoyl-CoA + 2 NADPH + 2 H(+) = 18-methylnonadecan-1-ol + 2 NADP(+) + CoA. Catalyzes the reduction of saturated and unsaturated C16 or C18 fatty acyl-CoA to fatty alcohols. It plays an essential role in the production of ether lipids/plasmalogens which synthesis requires fatty alcohols. In parallel, it is also required for wax monoesters production since fatty alcohols also constitute a substrate for their synthesis. Its function is as follows. Catalyzes the reduction of saturated and unsaturated C16 or C18 fatty acyl-CoA to fatty alcohols. It plays an essential role in the production of ether lipids/plasmalogens which synthesis requires fatty alcohols. In parallel, it is also required for wax monoesters production since fatty alcohols also constitute a substrate for their synthesis. In Rattus norvegicus (Rat), this protein is Fatty acyl-CoA reductase 1.